The following is a 1513-amino-acid chain: Lid2 complex component lid2 (1513 aa).

The region spanning 56–97 (GLSVQLNASNMTDPFKFLLDNWHTIFKNGAIKLLPPEGWQIP) is the JmjN domain. The region spanning 121 to 212 (YEKNYDYFKK…YIKPFERDSS (92 aa)) is the ARID domain. The segment at 211–253 (SSPSFKSKRSESSTRKIRNTRSSAQQESPIPETSAQSPVQTIQ) is disordered. Over residues 230 to 253 (TRSSAQQESPIPETSAQSPVQTIQ) the composition is skewed to polar residues. Residues 268-318 (GEQCEYCGLDKNPETILLCDGCEAAYHTSCLDPPLTSIPKEDWYCDACKFN) form a PHD-type 1 zinc finger. The JmjC domain maps to 408-574 (KYSSEPWNLH…DGLLNSSISV (167 aa)). Phosphoserine is present on Ser722. The interval 1063–1086 (LSLNDRPGPPMEPASRETSPDSEG) is disordered. Residues 1076–1086 (ASRETSPDSEG) show a composition bias toward basic and acidic residues. Residues 1093 to 1145 (KKGCIFCFCRLPESGVMIECEICHEWYHAKCLKMSKKKLRQDEKFTCPICDYR) form a PHD-type 2 zinc finger. The RING-type 1; degenerate zinc-finger motif lies at 1096–1143 (CIFCFCRLPESGVMIECEICHEWYHAKCLKMSKKKLRQDEKFTCPICD). Disordered stretches follow at residues 1244 to 1268 (APNP…RQRQ) and 1280 to 1327 (ASAI…NNKN). Basic residues predominate over residues 1257 to 1268 (TRKPRPTKRQRQ). Residues 1301–1313 (VEAETKSKSEKSP) show a composition bias toward basic and acidic residues. Residues 1316-1326 (NGTNISDANNK) show a composition bias toward polar residues. The PHD-type 3 zinc-finger motif lies at 1352-1403 (NSSCLCGEEFSPRDSFIDCTICERRFHYDCVGLNNEIADSVSKFTCPICMEQ). The RING-type 2; degenerate zinc-finger motif lies at 1354–1401 (SCLCGEEFSPRDSFIDCTICERRFHYDCVGLNNEIADSVSKFTCPICM).

As to quaternary structure, component of the Lid2 complex composed of ash2, jmj3, lid2, sdc1 and snt2.

The protein localises to the nucleus. The protein is Lid2 complex component lid2 (lid2) of Schizosaccharomyces pombe (strain 972 / ATCC 24843) (Fission yeast).